A 334-amino-acid chain; its full sequence is Ribosomal RNA small subunit methyltransferase H (334 aa).

S-adenosyl-L-methionine is bound by residues 34–36 (GGY), Asp-52, Ala-87, Asp-100, and Gln-107.

It belongs to the methyltransferase superfamily. RsmH family.

The protein localises to the cytoplasm. The enzyme catalyses cytidine(1402) in 16S rRNA + S-adenosyl-L-methionine = N(4)-methylcytidine(1402) in 16S rRNA + S-adenosyl-L-homocysteine + H(+). Specifically methylates the N4 position of cytidine in position 1402 (C1402) of 16S rRNA. The polypeptide is Ribosomal RNA small subunit methyltransferase H (Maricaulis maris (strain MCS10) (Caulobacter maris)).